The following is a 177-amino-acid chain: Inorganic pyrophosphatase (177 aa).

Lysine 31, arginine 45, and tyrosine 57 together coordinate substrate. Residues aspartate 67, aspartate 72, and aspartate 104 each coordinate Mg(2+). Tyrosine 141 lines the substrate pocket.

The protein belongs to the PPase family. In terms of assembly, homohexamer. Also forms homotrimers, but the trimeric form is 23% less active than the hexamer. In fact, likely forms a dimer of trimers. Mg(2+) serves as cofactor.

Its subcellular location is the cytoplasm. The catalysed reaction is diphosphate + H2O = 2 phosphate + H(+). Inhibited by sodium fluoride (NaF) in vitro, similarly to other class A type inorganic pyrophosphatases. Its function is as follows. Catalyzes the hydrolysis of inorganic pyrophosphate (PPi) forming two phosphate ions. The hydrolysis of PPi by inorganic pyrophosphatase releases a considerable amount of energy that can drive unfavorable biochemical transformations to completion. Is not active on nucleoside triphosphates (ATP, TTP, GTP, or CTP) or nucleoside diphosphate (ADP). The sequence is that of Inorganic pyrophosphatase from Haloferax volcanii (strain ATCC 29605 / DSM 3757 / JCM 8879 / NBRC 14742 / NCIMB 2012 / VKM B-1768 / DS2) (Halobacterium volcanii).